The primary structure comprises 497 residues: L-arabinose isomerase (497 aa).

Mn(2+) is bound by residues Glu306, Glu333, His349, and His448.

This sequence belongs to the arabinose isomerase family. It depends on Mn(2+) as a cofactor.

It catalyses the reaction beta-L-arabinopyranose = L-ribulose. The protein operates within carbohydrate degradation; L-arabinose degradation via L-ribulose; D-xylulose 5-phosphate from L-arabinose (bacterial route): step 1/3. Functionally, catalyzes the conversion of L-arabinose to L-ribulose. This Vibrio parahaemolyticus serotype O3:K6 (strain RIMD 2210633) protein is L-arabinose isomerase.